The following is a 493-amino-acid chain: Angiopoietin-related protein 2 (493 aa).

The N-terminal stretch at 1-22 (MRPLCVTCWWLGLLAAMGAVAG) is a signal peptide. Coiled coils occupy residues 76–115 (PEVLLENRVHKQELELLNNELLKQKRQIETLQQLVEVDGG) and 152–206 (ALEL…HCQR). N-linked (GlcNAc...) asparagine glycosylation is found at Asn-164 and Asn-192. The Fibrinogen C-terminal domain occupies 269-489 (DKPSGPWRDC…KVVMMIRPNP (221 aa)). Disulfide bonds link Cys-278-Cys-307 and Cys-430-Cys-443.

N-glycosylated. Widely expressed in heart, small intestine, spleen and stomach. Also found in lower levels in colon, ovary, adrenal gland, skeletal muscle and in prostate.

The protein localises to the secreted. Its function is as follows. Induces sprouting in endothelial cells through an autocrine and paracrine action. This chain is Angiopoietin-related protein 2 (ANGPTL2), found in Homo sapiens (Human).